The primary structure comprises 553 residues: CTP synthase (553 aa).

The amidoligase domain stretch occupies residues 1 to 270; that stretch reads MTKYVFVTGG…DRLICEELRL (270 aa). S13 lines the CTP pocket. S13 is a binding site for UTP. Residues 14-19 and D71 each bind ATP; that span reads SLGKGI. Mg(2+) is bound by residues D71 and E144. CTP-binding positions include 151–153, 191–196, and K227; these read DIE and KTKPTQ. UTP is bound by residues 191-196 and K227; that span reads KTKPTQ. Residues 295-547 form the Glutamine amidotransferase type-1 domain; that stretch reads TIGMVGKYVD…VQAALACQQT (253 aa). G356 provides a ligand contact to L-glutamine. The active-site Nucleophile; for glutamine hydrolysis is the C383. L-glutamine contacts are provided by residues 384–387, E407, and R473; that span reads LGMQ. Active-site residues include H520 and E522.

This sequence belongs to the CTP synthase family. As to quaternary structure, homotetramer.

The enzyme catalyses UTP + L-glutamine + ATP + H2O = CTP + L-glutamate + ADP + phosphate + 2 H(+). It carries out the reaction L-glutamine + H2O = L-glutamate + NH4(+). It catalyses the reaction UTP + NH4(+) + ATP = CTP + ADP + phosphate + 2 H(+). It participates in pyrimidine metabolism; CTP biosynthesis via de novo pathway; CTP from UDP: step 2/2. Its activity is regulated as follows. Allosterically activated by GTP, when glutamine is the substrate; GTP has no effect on the reaction when ammonia is the substrate. The allosteric effector GTP functions by stabilizing the protein conformation that binds the tetrahedral intermediate(s) formed during glutamine hydrolysis. Inhibited by the product CTP, via allosteric rather than competitive inhibition. Functionally, catalyzes the ATP-dependent amination of UTP to CTP with either L-glutamine or ammonia as the source of nitrogen. Regulates intracellular CTP levels through interactions with the four ribonucleotide triphosphates. In Burkholderia mallei (strain NCTC 10229), this protein is CTP synthase.